A 315-amino-acid chain; its full sequence is Homoserine kinase (315 aa).

ATP is bound at residue 97–107; sequence PPARGLGSSAT.

This sequence belongs to the GHMP kinase family. Homoserine kinase subfamily.

Its subcellular location is the cytoplasm. The enzyme catalyses L-homoserine + ATP = O-phospho-L-homoserine + ADP + H(+). Its pathway is amino-acid biosynthesis; L-threonine biosynthesis; L-threonine from L-aspartate: step 4/5. In terms of biological role, catalyzes the ATP-dependent phosphorylation of L-homoserine to L-homoserine phosphate. This chain is Homoserine kinase, found in Prochlorococcus marinus (strain MIT 9515).